The following is a 437-amino-acid chain: Adenylosuccinate synthetase (437 aa).

GTP is bound by residues 12–18 and 40–42; these read GDEGKGK and GHT. The active-site Proton acceptor is the D13. The Mg(2+) site is built by D13 and G40. IMP contacts are provided by residues 13-16, 38-41, T128, R142, Q223, T238, and R302; these read DEGK and NAGH. The active-site Proton donor is the H41. Residues 119–138 are disordered; that stretch reads QRGERRIGTTGRGIGPTYAD. A substrate-binding site is contributed by 298–304; the sequence is TTTGRRR. Residues R304, 330–332, and 412–414 each bind GTP; these read KLD and SLG.

It belongs to the adenylosuccinate synthetase family. As to quaternary structure, homodimer. Mg(2+) serves as cofactor.

The protein resides in the cytoplasm. It carries out the reaction IMP + L-aspartate + GTP = N(6)-(1,2-dicarboxyethyl)-AMP + GDP + phosphate + 2 H(+). Its pathway is purine metabolism; AMP biosynthesis via de novo pathway; AMP from IMP: step 1/2. Its function is as follows. Plays an important role in the de novo pathway of purine nucleotide biosynthesis. Catalyzes the first committed step in the biosynthesis of AMP from IMP. The chain is Adenylosuccinate synthetase from Synechococcus sp. (strain WH7803).